Here is a 108-residue protein sequence, read N- to C-terminus: UPF0060 membrane protein Spro_2289 (108 aa).

4 consecutive transmembrane segments (helical) span residues 6–26 (LLFFATALAEIIGCFLPYLWL), 31–51 (SAWLLLPAAASLMLFVWLLTL), 61–81 (AAYGGVYVATALLWLRVVDGV), and 85–105 (ALDWLGAGVALAGMLIIVSGW).

It belongs to the UPF0060 family.

The protein resides in the cell inner membrane. This Serratia proteamaculans (strain 568) protein is UPF0060 membrane protein Spro_2289.